The following is a 305-amino-acid chain: Nucleotide-binding protein Rxyl_2009 (305 aa).

24 to 31 (GLSGAGKS) is an ATP binding site. 75-78 (DIRG) contributes to the GTP binding site.

It belongs to the RapZ-like family.

Displays ATPase and GTPase activities. The protein is Nucleotide-binding protein Rxyl_2009 of Rubrobacter xylanophilus (strain DSM 9941 / JCM 11954 / NBRC 16129 / PRD-1).